The chain runs to 209 residues: Uracil phosphoribosyltransferase (209 aa).

5-phospho-alpha-D-ribose 1-diphosphate-binding positions include Arg79, Arg104, and 131–139 (DPMLATGGS). Residues Ile194 and 199-201 (GDA) contribute to the uracil site. Asp200 contributes to the 5-phospho-alpha-D-ribose 1-diphosphate binding site.

It belongs to the UPRTase family. Requires Mg(2+) as cofactor.

The catalysed reaction is UMP + diphosphate = 5-phospho-alpha-D-ribose 1-diphosphate + uracil. It functions in the pathway pyrimidine metabolism; UMP biosynthesis via salvage pathway; UMP from uracil: step 1/1. Its activity is regulated as follows. Allosterically activated by GTP. Functionally, catalyzes the conversion of uracil and 5-phospho-alpha-D-ribose 1-diphosphate (PRPP) to UMP and diphosphate. The polypeptide is Uracil phosphoribosyltransferase (Latilactobacillus sakei (Lactobacillus sakei)).